Consider the following 659-residue polypeptide: Alpha-amylase (659 aa).

An N-terminal signal peptide occupies residues 1-27; sequence MFAKRFKTSLLPLFAGFLLLFHLVLAG. The propeptide occupies 28 to 41; the sequence is PAAASAETANKSNE. Ca(2+)-binding residues include Asn142, Thr178, Asp187, Gly210, and Asp212. Residue Asp217 is the Nucleophile of the active site. His221 is a Ca(2+) binding site. The active-site Proton donor is the Glu249.

The protein belongs to the glycosyl hydrolase 13 family. Monomer. The cofactor is Ca(2+).

It localises to the secreted. The catalysed reaction is Endohydrolysis of (1-&gt;4)-alpha-D-glucosidic linkages in polysaccharides containing three or more (1-&gt;4)-alpha-linked D-glucose units.. This chain is Alpha-amylase (amyE), found in Bacillus subtilis (strain 168).